Reading from the N-terminus, the 56-residue chain is Small ribosomal subunit protein uS14 (56 aa).

The Zn(2+) site is built by cysteine 21, cysteine 24, cysteine 39, and cysteine 42.

The protein belongs to the universal ribosomal protein uS14 family. In terms of assembly, component of the small ribosomal subunit. Mature ribosomes consist of a small (40S) and a large (60S) subunit. The 40S subunit contains about 32 different proteins and 1 molecule of RNA (18S). The 60S subunit contains 45 different proteins and 3 molecules of RNA (25S, 5.8S and 5S). The cofactor is Zn(2+).

Its subcellular location is the cytoplasm. Component of the ribosome, a large ribonucleoprotein complex responsible for the synthesis of proteins in the cell. The small ribosomal subunit (SSU) binds messenger RNAs (mRNAs) and translates the encoded message by selecting cognate aminoacyl-transfer RNA (tRNA) molecules. The large subunit (LSU) contains the ribosomal catalytic site termed the peptidyl transferase center (PTC), which catalyzes the formation of peptide bonds, thereby polymerizing the amino acids delivered by tRNAs into a polypeptide chain. The nascent polypeptides leave the ribosome through a tunnel in the LSU and interact with protein factors that function in enzymatic processing, targeting, and the membrane insertion of nascent chains at the exit of the ribosomal tunnel. This chain is Small ribosomal subunit protein uS14, found in Candida albicans (strain SC5314 / ATCC MYA-2876) (Yeast).